We begin with the raw amino-acid sequence, 188 residues long: UPF0340 protein SSU98_0310 (188 aa).

The protein belongs to the UPF0340 family.

This is UPF0340 protein SSU98_0310 from Streptococcus suis (strain 98HAH33).